A 402-amino-acid chain; its full sequence is MPYLEIVLALLVLSFQLGHSDDDSGMCMAKEPCSEAPQQETKVDLYKATDNKYVALIQEALASYEPCQQANCSCHADVLKTDLRPFKGGISEQMVERARSYGTKYQIVDHRLYRQKDCMFPARCSGVEHFIKPNLPHLPDMELIINCRDWPQINRHWKQEKLPVLSFSKTDDYLDIMYPTWGFWEGGPAISLYPTGLGRWDQHRVSIKKAADSWKWEKKKAKAFFRGSRTSDERDPLVLLSRRKPELVDAQYTKNQAWKSPKDTLNAKPAQEVRLEDHCQYKYLFNFRGVAASFRFKHLFLCRSLVFHVGSEWQEFFYPSLKPWVHYVPVRVGATQEELEELIEFFAEHDDLAREIADRGFEHVWKHLRMKDVECYWRKLLRRYGKLVKYEVKRDHSLVEVY.

Residues Met-1–Ser-20 form the signal peptide. 4 disulfide bridges follow: Cys-67–Cys-74, Cys-72–Cys-375, Cys-118–Cys-124, and Cys-279–Cys-302. A glycan (N-linked (GlcNAc...) asparagine) is linked at Asn-71. The Proton donor/acceptor role is filled by Asp-149. Residues Ala-189 to Pro-194 are interaction with the consensus sequence C-X-S-X-[PA]-C in peptide substrates. Residues Arg-226 to Thr-230, Arg-234, Val-273 to Leu-275, and Ala-291 to Arg-295 contribute to the UDP-alpha-D-glucose site.

The protein belongs to the glycosyltransferase 90 family.

The protein resides in the endoplasmic reticulum lumen. The protein localises to the secreted. It participates in protein modification; protein glycosylation. In terms of biological role, protein O-glucosyltransferase. Catalyzes the reaction that attaches glucose through an O-glycosidic linkage to a conserved serine residue found in the consensus sequence C-X-S-X-[PA]-C in epidermal growth factor-like repeats. Regulates Notch signaling by glucosylating Notch in the ER, glucosylation is required for the correct folding and cleavage of Notch. The chain is O-glucosyltransferase rumi homolog from Aedes aegypti (Yellowfever mosquito).